The chain runs to 375 residues: Platelet-derived growth factor receptor-like protein (375 aa).

A signal peptide spans 1–21 (MKVWLLLGLLLVHEALEDVTG). A disordered region spans residues 22 to 64 (QHLPKNKRPKEPGENRIKPTNKKVKPKIPKIKDRDSADSTPKT). Positions 40 to 50 (PTNKKVKPKIP) are enriched in basic residues. Residues 62–159 (PKTQSIMMQV…GYICRKDETK (98 aa)) enclose the Ig-like C2-type 1 domain. An intrachain disulfide couples Cys-96 to Cys-143. Residues Asn-132 and Asn-219 are each glycosylated (N-linked (GlcNAc...) asparagine). The Ig-like C2-type 2 domain maps to 272-375 (PSTTILASSN…TTVATTVEFS (104 aa)). A disulfide bridge links Cys-293 with Cys-357.

Forms a complex composed of PDGFRL, TNK2 and GRB2.

It is found in the secreted. This is Platelet-derived growth factor receptor-like protein (PDGFRL) from Macaca fascicularis (Crab-eating macaque).